We begin with the raw amino-acid sequence, 562 residues long: Urocanate hydratase (562 aa).

NAD(+) is bound by residues glycine 53–glycine 54, glutamine 131, glycine 177–glycine 179, glutamate 197, arginine 202, asparagine 243–alanine 244, glutamine 268–histidine 272, tyrosine 278–leucine 279, and tyrosine 327. Cysteine 415 is an active-site residue. Glycine 497 is an NAD(+) binding site.

Belongs to the urocanase family. NAD(+) serves as cofactor.

It localises to the cytoplasm. The enzyme catalyses 4-imidazolone-5-propanoate = trans-urocanate + H2O. Its pathway is amino-acid degradation; L-histidine degradation into L-glutamate; N-formimidoyl-L-glutamate from L-histidine: step 2/3. In terms of biological role, catalyzes the conversion of urocanate to 4-imidazolone-5-propionate. This Chelativorans sp. (strain BNC1) protein is Urocanate hydratase.